The primary structure comprises 81 residues: Defensin-like protein 144 (81 aa).

Positions 1–24 are cleaved as a signal peptide; that stretch reads MKNSFRFSFTVITTFIICVLVSGA. 4 disulfides stabilise this stretch: cysteine 30/cysteine 74, cysteine 42/cysteine 61, cysteine 47/cysteine 69, and cysteine 51/cysteine 71.

It belongs to the DEFL family.

The protein resides in the secreted. The polypeptide is Defensin-like protein 144 (LCR10) (Arabidopsis thaliana (Mouse-ear cress)).